Reading from the N-terminus, the 112-residue chain is Ig kappa chain V-III region TEPC 124 (112 aa).

Residues D1–C23 are framework-1. C23 and C92 are joined by a disulfide. The tract at residues R24 to Z38 is complementarity-determining-1. The segment at W39 to Y53 is framework-2. The tract at residues R54–S60 is complementarity-determining-2. The tract at residues G61 to C92 is framework-3. The segment at Z93 to T101 is complementarity-determining-3. Residues F102–K111 form a framework-4 region.

The protein is Ig kappa chain V-III region TEPC 124 of Mus musculus (Mouse).